Reading from the N-terminus, the 512-residue chain is MSSVNSIPTATSTVYISVLPATATPSGGSGGNVLHEDLNKFYDYGNTSWILACTPLCLIMVPGVAFFYSGLARRKNTLALIMLSMLGLCVSFFQWYFWGYSLAFSQTGTSGYIGNLRHFAFIRTLADYSPGSNNIPELVFANFQGMFAAITVALFTGAAAERGRIGPMLIITFVWLTVVYCPIACWIWNPNGWAFKFGVYDFAGGGPVEVGSGFAALAYTVCLGRRSKFVEEQFRPHSVLNVVLGTSLLWFGWLGFNGGSAYGSNLRAAMAITNTNLAGAVAGLVWVIYDYIFRTRKWSTIGFCSGVVAGLVAATPCAGFVSPHASLAIGAITGLCCNWAIKLKSHMRIDDAMDIFAIHGVAGFVGTFLNGLFAVDYIAAMDGIYVGENKIRGGWFDHHWRQLGLQMAYICAVGAYDFVVTFIILFITDKIPYLQLRVSPDAEEIGVDADQIGEYAFDYIEERREYKHWKISPAGVPEEIIISNGVAQPTGNVAAPGKILESTNPLELGLTI.

Topologically, residues Met-1 to Thr-47 are extracellular. The helical transmembrane segment at Ser-48–Tyr-68 threads the bilayer. The Cytoplasmic segment spans residues Ser-69 to Thr-77. A helical membrane pass occupies residues Leu-78–Trp-98. Residues Gly-99–Glu-137 are Extracellular-facing. Residues Leu-138–Ala-158 traverse the membrane as a helical segment. The Cytoplasmic portion of the chain corresponds to Ala-159 to Pro-167. A helical membrane pass occupies residues Met-168–Trp-188. At Asn-189–Asp-201 the chain is on the extracellular side. The chain crosses the membrane as a helical span at residues Phe-202 to Cys-222. At Leu-223 to Ser-238 the chain is on the cytoplasmic side. The chain crosses the membrane as a helical span at residues Val-239–Gly-259. Residues Ser-260–Arg-267 are Extracellular-facing. A helical transmembrane segment spans residues Ala-268–Ile-288. Residues Tyr-289–Thr-300 are Cytoplasmic-facing. The chain crosses the membrane as a helical span at residues Ile-301–Val-321. Position 322 (Ser-322) is a topological domain, extracellular. The chain crosses the membrane as a helical span at residues Pro-323–Leu-343. The Cytoplasmic segment spans residues Lys-344–Asp-354. Residues Ile-355–Val-375 traverse the membrane as a helical segment. The Extracellular portion of the chain corresponds to Asp-376–Gln-406. The helical transmembrane segment at Met-407–Ile-427 threads the bilayer. Topologically, residues Thr-428–Ile-512 are cytoplasmic.

It belongs to the ammonia transporter channel (TC 1.A.11.2) family.

The protein localises to the membrane. Functionally, transporter for ammonium to use as a nitrogen source. This chain is Ammonium transporter 2 (amt2), found in Schizosaccharomyces pombe (strain 972 / ATCC 24843) (Fission yeast).